The following is a 157-amino-acid chain: Phosphopantetheine adenylyltransferase (157 aa).

Residue Thr10 coordinates substrate. ATP contacts are provided by residues 10–11 (TF) and His18. Substrate-binding residues include Lys42, Leu74, and Arg88. ATP-binding positions include 89 to 91 (GLR), Glu99, and 124 to 130 (NAFISSS).

The protein belongs to the bacterial CoaD family. In terms of assembly, homohexamer. Mg(2+) is required as a cofactor.

It localises to the cytoplasm. The enzyme catalyses (R)-4'-phosphopantetheine + ATP + H(+) = 3'-dephospho-CoA + diphosphate. Its pathway is cofactor biosynthesis; coenzyme A biosynthesis; CoA from (R)-pantothenate: step 4/5. Its function is as follows. Reversibly transfers an adenylyl group from ATP to 4'-phosphopantetheine, yielding dephospho-CoA (dPCoA) and pyrophosphate. The protein is Phosphopantetheine adenylyltransferase of Helicobacter pylori (strain Shi470).